The sequence spans 621 residues: Zinc metalloproteinase-disintegrin-like NaMP (621 aa).

The N-terminal stretch at methionine 1–serine 20 is a signal peptide. Residues threonine 21 to isoleucine 188 constitute a propeptide that is removed on maturation. Residues lysine 206–proline 402 enclose the Peptidase M12B domain. Residues asparagine 225, asparagine 268, and asparagine 319 are each glycosylated (N-linked (GlcNAc...) asparagine). Intrachain disulfides connect cysteine 317–cysteine 397, cysteine 357–cysteine 381, cysteine 359–cysteine 364, cysteine 413–cysteine 442, cysteine 424–cysteine 437, cysteine 426–cysteine 432, cysteine 436–cysteine 459, cysteine 450–cysteine 456, cysteine 455–cysteine 481, cysteine 468–cysteine 488, cysteine 475–cysteine 507, cysteine 500–cysteine 512, cysteine 519–cysteine 569, cysteine 534–cysteine 579, cysteine 547–cysteine 557, cysteine 564–cysteine 605, and cysteine 599–cysteine 610. Histidine 342 lines the Zn(2+) pocket. The active site involves glutamate 343. Zn(2+) contacts are provided by histidine 346 and histidine 352. Residues threonine 410–asparagine 496 enclose the Disintegrin domain. A D/ECD-tripeptide motif is present at residues aspartate 474–aspartate 476. Asparagine 551 is a glycosylation site (N-linked (GlcNAc...) asparagine).

It belongs to the venom metalloproteinase (M12B) family. P-III subfamily. P-IIIa sub-subfamily. Monomer. Requires Zn(2+) as cofactor. Expressed by the venom gland.

Its subcellular location is the secreted. Its function is as follows. Snake venom zinc metalloproteinase that inhibits platelet aggregation and degrades fibrinogen. This Naja atra (Chinese cobra) protein is Zinc metalloproteinase-disintegrin-like NaMP.